Consider the following 851-residue polypeptide: Leucine--tRNA ligase (851 aa).

The short motif at 51–61 (PYPSGDLHMGH) is the 'HIGH' region element. The 'KMSKS' region signature appears at 615–619 (KMSKS). K618 contacts ATP.

It belongs to the class-I aminoacyl-tRNA synthetase family.

The protein resides in the cytoplasm. It carries out the reaction tRNA(Leu) + L-leucine + ATP = L-leucyl-tRNA(Leu) + AMP + diphosphate. In Clavibacter michiganensis subsp. michiganensis (strain NCPPB 382), this protein is Leucine--tRNA ligase.